Reading from the N-terminus, the 400-residue chain is Plasminogen activator inhibitor 1 (400 aa).

Positions 1–21 (MQMSTVCLALGLALVFGEASA) are cleaved as a signal peptide. 3 N-linked (GlcNAc...) asparagine glycosylation sites follow: Asn230, Asn286, and Asn350.

It belongs to the serpin family. In terms of assembly, forms a heterodimer with TMPRSS7. Interacts with VTN. Binds LRP1B; binding is followed by internalization and degradation. Interacts with PPP1CB. In complex with PLAU/uPA, interacts with PLAUR/uPAR. Interacts with SORL1 and LRP1, either alone or in complex with PLAU; these interactions are abolished in the presence of LRPAP1/RAP. The ternary complex composed of PLAUR-PLAU-PAI1 also interacts with SORL1. Interacts with PLAT/tPA. Also interacts with SORL1, when complexed to PLAT/tPA.

It localises to the secreted. Serine protease inhibitor. Inhibits TMPRSS7. Is a primary inhibitor of tissue-type plasminogen activator (PLAT) and urokinase-type plasminogen activator (PLAU). As PLAT inhibitor, it is required for fibrinolysis down-regulation and is responsible for the controlled degradation of blood clots. As PLAU inhibitor, it is involved in the regulation of cell adhesion and spreading. Acts as a regulator of cell migration, independently of its role as protease inhibitor. It is required for stimulation of keratinocyte migration during cutaneous injury repair. It is involved in cellular and replicative senescence. Plays a role in alveolar type 2 cells senescence in the lung. Is involved in the regulation of cementogenic differentiation of periodontal ligament stem cells, and regulates odontoblast differentiation and dentin formation during odontogenesis. This Neovison vison (American mink) protein is Plasminogen activator inhibitor 1 (SERPINE1).